Here is an 878-residue protein sequence, read N- to C-terminus: MYDSRGVALHSELIHRWNHAFSILSIVAFPKKRLLFAGSQDSKILVFDLPTYNLIHTIRLGESQEETHTRSSVLCLTGSEDENFLFSGGADSLVRIWSIGEKTIRDDFLPVTEIATVYSVTDIGDIFSLAYLDSLETIVFGCQNASLLYVENLIQKIEKKSSDGVENINKLPHRRYDKFFDSLGPTGYSSNSLSQTSLTSLQENCGAAIIEVPSENIIKYAHYGFIYSINKLCPRFNQLLEKSSRTSGAEHIISSAGDGISKLWEFSKDKGQNTVKISLINDKIDNEDSVISQTIEFPFLYCGLTDGIIKIWDLNTQQIISTLKTKHESDVISISVYMDHVFAIDESGITHFYQNQVNHWNPQQGKILSSEIFSKSNAGSVSLLTGGSDGSLTLWDITSLLSAVPLSSNSPINASSTLQTTNLWAAYQSASLNNEEMLNTLRELISFQTVSQSKDTTNTLSLRRCAIYLQQLFLKFGATNSQLFPLPDGGNPVVFAYFQGNGKVSQVKGAKKKRILWYGHYDVISSGNTFNWNTDPFTLTCENGYLKGRGVSDNKGPLVSAIHSVAYLFQQGELVNDVVFLVEGSEEIGSASLKQVCEKYHDIIGKDIDWILLSNSTWVDQEHPCLNYGLRGVINAQIKVWSDKPDGHSGLNGGVYDEPMVNLVKIVSKLQNEQNEIMIPNFYSPLKDLTEEEYQRFQKITELANIDENTTVQDLITNWTKPSLSMTTVKFSGPGNITVIPKSVTMGISIRLVPEQSVEQVKRDLKAYLEESFKQLKSQNHLEIKVLNEAEGWLGDPTNHAYQILKDEITTAWDVEPLLVREGGSISCLRMLERIFDAPAVQIPCGQSTDNGHLANENLRIKNWSNLTEILSKVFNRL.

WD repeat units follow at residues 18–57 (NHAFSILSIVAFPKKRLLFAGSQDSKILVFDLPTYNLIHT), 68–107 (HTRSSVLCLTGSEDENFLFSGGADSLVRIWSIGEKTIRDD), 235–274 (RFNQLLEKSSRTSGAEHIISSAGDGISKLWEFSKDKGQNT), 282–322 (DKID…IIST), and 362–405 (PQQG…SAVP). Histidine 520 serves as a coordination point for Zn(2+). Aspartate 522 is an active-site residue. Residue aspartate 553 coordinates Zn(2+). The active-site Proton acceptor is the glutamate 586. Zn(2+) is bound at residue glutamate 587. The stretch at 608–651 (IDWILLSNSTWVDQEHPCLNYGLRGVINAQIKVWSDKPDGHSGL) is one WD 6 repeat. Residue histidine 853 participates in Zn(2+) binding.

It belongs to the peptidase M20A family. In terms of assembly, component of the GSH degradosomal complex composed of at least DUG1, DUG2 and DUG3. Zn(2+) is required as a cofactor.

The protein resides in the cytoplasm. It is found in the nucleus. Functionally, component of the GSH degradosomal complex involved in the degradation of glutathione (GSH) and other peptides containing a gamma-glu-X bond. This chain is Probable di- and tripeptidase DUG2 (DUG2), found in Saccharomyces cerevisiae (strain ATCC 204508 / S288c) (Baker's yeast).